A 263-amino-acid polypeptide reads, in one-letter code: Phosphatidylglycerol--prolipoprotein diacylglyceryl transferase (263 aa).

A run of 4 helical transmembrane segments spans residues Ile15–Ala35, Phe52–Gln72, Ile83–Val103, and Ala112–Ile132. Arg134 contributes to the a 1,2-diacyl-sn-glycero-3-phospho-(1'-sn-glycerol) binding site. A run of 3 helical transmembrane segments spans residues Val170 to Leu190, Gly200 to Met220, and Phe227 to Leu247.

The protein belongs to the Lgt family.

The protein resides in the cell membrane. The enzyme catalyses L-cysteinyl-[prolipoprotein] + a 1,2-diacyl-sn-glycero-3-phospho-(1'-sn-glycerol) = an S-1,2-diacyl-sn-glyceryl-L-cysteinyl-[prolipoprotein] + sn-glycerol 1-phosphate + H(+). The protein operates within protein modification; lipoprotein biosynthesis (diacylglyceryl transfer). In terms of biological role, catalyzes the transfer of the diacylglyceryl group from phosphatidylglycerol to the sulfhydryl group of the N-terminal cysteine of a prolipoprotein, the first step in the formation of mature lipoproteins. The polypeptide is Phosphatidylglycerol--prolipoprotein diacylglyceryl transferase (Streptococcus thermophilus (strain CNRZ 1066)).